A 172-amino-acid polypeptide reads, in one-letter code: RNA pyrophosphohydrolase (172 aa).

A Nudix hydrolase domain is found at 6–149 (GYRLNVGIVI…KRDVYRRAMK (144 aa)). A Nudix box motif is present at residues 38-59 (GGIDEGETPEQAMYRELYEEVG).

Belongs to the Nudix hydrolase family. RppH subfamily. The cofactor is a divalent metal cation.

Its function is as follows. Accelerates the degradation of transcripts by removing pyrophosphate from the 5'-end of triphosphorylated RNA, leading to a more labile monophosphorylated state that can stimulate subsequent ribonuclease cleavage. In Vibrio atlanticus (strain LGP32) (Vibrio splendidus (strain Mel32)), this protein is RNA pyrophosphohydrolase.